A 273-amino-acid polypeptide reads, in one-letter code: Pantothenate synthetase (273 aa).

Residue 27-34 (MGALHDGH) coordinates ATP. H34 (proton donor) is an active-site residue. Residue Q58 coordinates (R)-pantoate. Residue Q58 coordinates beta-alanine. 144–147 (GKKD) is a binding site for ATP. Q150 is a (R)-pantoate binding site. ATP-binding positions include V173 and 181 to 184 (LSSR).

This sequence belongs to the pantothenate synthetase family. In terms of assembly, homodimer.

The protein localises to the cytoplasm. The catalysed reaction is (R)-pantoate + beta-alanine + ATP = (R)-pantothenate + AMP + diphosphate + H(+). Its pathway is cofactor biosynthesis; (R)-pantothenate biosynthesis; (R)-pantothenate from (R)-pantoate and beta-alanine: step 1/1. Its function is as follows. Catalyzes the condensation of pantoate with beta-alanine in an ATP-dependent reaction via a pantoyl-adenylate intermediate. The chain is Pantothenate synthetase from Campylobacter curvus (strain 525.92).